Reading from the N-terminus, the 366-residue chain is tRNA(Met) cytidine acetate ligase (366 aa).

ATP-binding positions include 7–20 (IAEFNPFHYGHQYL), Gly96, Asn152, and Arg175.

It belongs to the TmcAL family.

The protein localises to the cytoplasm. The catalysed reaction is cytidine(34) in elongator tRNA(Met) + acetate + ATP = N(4)-acetylcytidine(34) in elongator tRNA(Met) + AMP + diphosphate. Functionally, catalyzes the formation of N(4)-acetylcytidine (ac(4)C) at the wobble position of elongator tRNA(Met), using acetate and ATP as substrates. First activates an acetate ion to form acetyladenylate (Ac-AMP) and then transfers the acetyl group to tRNA to form ac(4)C34. This Streptococcus equi subsp. zooepidemicus (strain H70) protein is tRNA(Met) cytidine acetate ligase.